The following is a 379-amino-acid chain: L-lactate dehydrogenase (379 aa).

Residues methionine 1 to proline 379 form the FMN hydroxy acid dehydrogenase domain. Tyrosine 24 provides a ligand contact to substrate. 2 residues coordinate FMN: serine 106 and glutamine 127. Tyrosine 129 serves as a coordination point for substrate. Residue threonine 155 participates in FMN binding. Arginine 164 provides a ligand contact to substrate. FMN is bound at residue lysine 251. The active-site Proton acceptor is histidine 275. Position 278 (arginine 278) interacts with substrate. Aspartate 306–arginine 330 contributes to the FMN binding site.

The protein belongs to the FMN-dependent alpha-hydroxy acid dehydrogenase family. FMN is required as a cofactor.

The protein localises to the cell membrane. It carries out the reaction (S)-lactate + A = pyruvate + AH2. In terms of biological role, catalyzes the conversion of L-lactate to pyruvate. Is coupled to the respiratory chain. The polypeptide is L-lactate dehydrogenase (Alcaligenes faecalis).